Consider the following 564-residue polypeptide: Iron-sensing transcriptional repressor (564 aa).

A GATA-type 1 zinc finger spans residues 12 to 36 (CSNCHKTTTSLWRRGPDNSLLCNAC). Residues 100–170 (ASKSQSGRKS…SSPPHEPSVT (71 aa)) form a disordered region. Ser-109 is subject to Phosphoserine. The span at 109-120 (SLSPNPSSVPSS) shows a compositional bias: low complexity. The segment covering 135-148 (QIVSDTTTETSNGT) has biased composition (polar residues). The GATA-type 2 zinc finger occupies 172-196 (CQNCATTNTPLWRRDESGNPICNAC). Disordered regions lie at residues 226–285 (GNAN…NTGV), 381–409 (DSSKQLSESTTSNTDNNGVATANQSNPLG), and 443–496 (LLNP…VQGS). 4 stretches are compositionally biased toward polar residues: residues 240 to 253 (SGDSGSSVKQQSTR), 260 to 271 (SFPNGNGHASGN), 381 to 407 (DSSKQLSESTTSNTDNNGVATANQSNP), and 450 to 486 (PSNSDKQPSMSNGPKSEVSPSQSQQAPLIQSSTSPVS).

Interacts with tup11.

It localises to the nucleus. With respect to regulation, activated by iron. Its function is as follows. Transcriptional repressor that binds the consensus promoter sequence 5'-[AT]GATAA-3' during iron-replete conditions to down-regulate transcription of target genes. Represses the expression of the iron transporter fio1 in response to high iron concentrations. Also represses the expression of str1, str2 and str3. Represses the expression of shu1 in presence of iron. The sequence is that of Iron-sensing transcriptional repressor from Schizosaccharomyces pombe (strain 972 / ATCC 24843) (Fission yeast).